The primary structure comprises 208 residues: Octanoyltransferase (208 aa).

Residues 31–208 (GSEREMVWLL…LKKEFYKVFA (178 aa)) enclose the BPL/LPL catalytic domain. Residues 70 to 77 (RGGKYSYH), 142 to 144 (AFG), and 155 to 157 (GVA) contribute to the substrate site. Catalysis depends on Cys173, which acts as the Acyl-thioester intermediate.

It belongs to the LipB family.

It is found in the cytoplasm. It carries out the reaction octanoyl-[ACP] + L-lysyl-[protein] = N(6)-octanoyl-L-lysyl-[protein] + holo-[ACP] + H(+). It functions in the pathway protein modification; protein lipoylation via endogenous pathway; protein N(6)-(lipoyl)lysine from octanoyl-[acyl-carrier-protein]: step 1/2. Catalyzes the transfer of endogenously produced octanoic acid from octanoyl-acyl-carrier-protein onto the lipoyl domains of lipoate-dependent enzymes. Lipoyl-ACP can also act as a substrate although octanoyl-ACP is likely to be the physiological substrate. The chain is Octanoyltransferase from Anaplasma phagocytophilum (strain HZ).